A 428-amino-acid polypeptide reads, in one-letter code: Immunoglobulin superfamily containing leucine-rich repeat protein (428 aa).

A signal peptide spans 1–18 (MQELRLLCLVVLVGLAQA). The 32-residue stretch at 19–50 (CPEPCECGEKYGFHIADCAYRDLQAVPSGFPA) folds into the LRRNT domain. N-linked (GlcNAc...) asparagine glycosylation occurs at Asn-51. LRR repeat units lie at residues 51–72 (NVTTLSLSANQLPSLPGGAFRE), 75–96 (RLQSLWLAHNEIRSVAAGALAS), 99–122 (QLKSLDLSHNLISDFAWSDLHSLS), 123–144 (ALQLLKMDSNELTFIPRDAFRS), and 147–168 (ALRSLQLNHNRLHTLAEGTFAP). The LRRCT domain maps to 180–231 (NPFDCTCGIVWFKTWALTTAVSIPEQDNITCTSPHVLKGTRLNRLLPLPCSA). An Ig-like domain is found at 232 to 343 (PSVQLTYQPS…GSAESSVNVA (112 aa)). A disulfide bridge connects residues Cys-257 and Cys-327. An N-linked (GlcNAc...) asparagine glycan is attached at Asn-309.

The protein resides in the secreted. In Bos taurus (Bovine), this protein is Immunoglobulin superfamily containing leucine-rich repeat protein (ISLR).